We begin with the raw amino-acid sequence, 594 residues long: uncharacterized protein (594 aa).

A DNA-binding region (zn(2)-C6 fungal-type) is located at residues 11 to 38; that stretch reads CELCRRKKIRCNRELPSCQNCIVYQEEC. The helical transmembrane segment at 503-523 threads the bilayer; sequence YLWVFLYCPFTPFLVLFSNIV.

The protein localises to the nucleus. It is found in the membrane. This is an uncharacterized protein from Schizosaccharomyces pombe (strain 972 / ATCC 24843) (Fission yeast).